We begin with the raw amino-acid sequence, 238 residues long: Protein FEV (238 aa).

The ETS DNA-binding region spans 47-127 (IQLWQFLLEL…HGKRYAYRFD (81 aa)). Residues 129-238 (QGLAQACQPP…AASHLGGHYH (110 aa)) form a may mediate active transcriptional repression region.

This sequence belongs to the ETS family. In brain, exclusively expressed in the major serotonergic neurons of the dorsal and median raphe nuclei located in the midbrain and pons. Also detected in prostate and small intestine.

The protein localises to the nucleus. In terms of biological role, functions as a transcriptional regulator. According to PubMed:12761502, it functions as a transcriptional repressor. Functions in the differentiation and the maintenance of the central serotonergic neurons. May play a role in cell growth. In Homo sapiens (Human), this protein is Protein FEV (FEV).